Reading from the N-terminus, the 289-residue chain is Phenylalanine-4-hydroxylase (289 aa).

Positions 144, 149, and 189 each coordinate Fe cation.

Belongs to the biopterin-dependent aromatic amino acid hydroxylase family. The cofactor is Fe(2+).

It catalyses the reaction (6R)-L-erythro-5,6,7,8-tetrahydrobiopterin + L-phenylalanine + O2 = (4aS,6R)-4a-hydroxy-L-erythro-5,6,7,8-tetrahydrobiopterin + L-tyrosine. Its pathway is amino-acid degradation; L-phenylalanine degradation; acetoacetate and fumarate from L-phenylalanine: step 1/6. This is Phenylalanine-4-hydroxylase (phhA) from Vibrio cholerae serotype O1 (strain ATCC 39315 / El Tor Inaba N16961).